The chain runs to 33 residues: Beta-amanitin proprotein (33 aa).

The propeptide occupies Met-1–Pro-10. The cyclopeptide (Ile-Pro) cross-link spans Ile-11–Pro-18. The 2'-cysteinyl-6'-hydroxytryptophan sulfoxide (Trp-Cys) cross-link spans Trp-12–Cys-16. A propeptide spanning residues Cys-19 to Ala-33 is cleaved from the precursor.

It belongs to the MSDIN fungal toxin family. Processed by the macrocyclase-peptidase enzyme POPB to yield a toxic cyclic decapeptide. POPB first removes 10 residues from the N-terminus. Conformational trapping of the remaining peptide forces the enzyme to release this intermediate rather than proceed to macrocyclization. The enzyme rebinds the remaining peptide in a different conformation and catalyzes macrocyclization of the N-terminal 8 residues.

Toxin belonging to the bicyclic octapeptides amatoxins that acts by binding non-competitively to RNA polymerase II and greatly slowing the elongation of transcripts from target promoters. The sequence is that of Beta-amanitin proprotein from Amanita fuligineoides.